Consider the following 475-residue polypeptide: Bystin (475 aa).

Composition is skewed to basic residues over residues 1–12 and 29–41; these read MGKDVKKVHKLR and KPHK…RKKK. Disordered regions lie at residues 1–57 and 106–149; these read MGKD…ESVI and DFID…QFGV. 2 stretches are compositionally biased toward acidic residues: residues 45 to 54 and 107 to 119; these read ENDTGIDETE and FIDD…DADQ.

Belongs to the bystin family.

It is found in the nucleus. It localises to the nucleolus. Functionally, required for processing of 20S pre-rRNA precursor and biogenesis of 40S ribosomal subunits. The polypeptide is Bystin (bysl) (Dictyostelium discoideum (Social amoeba)).